The primary structure comprises 1787 residues: Chromodomain-helicase-DNA-binding protein 3 homolog (1787 aa).

2 disordered regions span residues 1–80 and 170–258; these read MSDD…PDPY and PVTP…KEQG. The span at 10–43 shows a compositional bias: acidic residues; the sequence is DGDETMEEDSMLAEGHEDGEEDVGEDEEEVETEE. The span at 56 to 71 shows a compositional bias: basic residues; sequence PPPKKKKGGKKSSKKK. Over residues 192 to 243 the composition is skewed to basic and acidic residues; sequence DGSDGEGGGHDSDQEFEALIKQHEKQQDEAEKGKEEARINRAAAKVDKRKAA. 2 PHD-type zinc fingers span residues 265–312 and 328–375; these read QENC…CEEH and MDYC…CIIP. Chromo domains follow at residues 373 to 476 and 501 to 583; these read IIPE…STLS and MQIH…GPKE. Positions 628–812 constitute a Helicase ATP-binding domain; sequence RHCWSNGTDA…FHLLNFLAPD (185 aa). 641-648 contributes to the ATP binding site; sequence DEMGLGKT. Residues 763 to 766 carry the DEAH box motif; that stretch reads DEAH. Positions 944 to 1107 constitute a Helicase C-terminal domain; it reads LLQKMLRKLK…GKSMSKTELD (164 aa). 4 disordered regions span residues 1120–1141, 1186–1212, 1248–1295, and 1754–1787; these read EEEA…PNEQ, TKEA…QDPN, ENMG…EERS, and RASS…YPRY. The segment covering 1190–1199 has biased composition (acidic residues); that stretch reads DDADDDEDET. Residues 1248-1261 show a composition bias toward polar residues; that stretch reads ENMGQDWSAQNNQQ. Over residues 1761-1773 the composition is skewed to basic and acidic residues; sequence TKDEPMDTSDKDI.

This sequence belongs to the SNF2/RAD54 helicase family. Expressed in the head and vulva.

It is found in the nucleus. The catalysed reaction is ATP + H2O = ADP + phosphate + H(+). Its function is as follows. ATP-dependent chromatin-remodeling factor that has a role in notch signaling-dependent vulval cell fate determination. May also have a role in pharyngeal precursor cell specification. The polypeptide is Chromodomain-helicase-DNA-binding protein 3 homolog (chd-3) (Caenorhabditis elegans).